Consider the following 5218-residue polypeptide: HC-toxin synthetase (5218 aa).

Positions 223 to 620 are adenylation 1; it reads SARAHEQDAN…VGRSDTQIKL (398 aa). One can recognise a Carrier 1 domain in the interval 769–843; it reads MNDDSLLLTA…TAASCIKSAQ (75 aa). An O-(pantetheine 4'-phosphoryl)serine modification is found at Ser-803. The tract at residues 858–1154 is condensation 1; that stretch reads IPVSPIQKLF…GWFTTISPVY (297 aa). Positions 1338-1806 are epimerization; it reads EGVYPGSPMQ…LPIVSEHDTA (469 aa). Positions 1828–2233 are adenylation 2; it reads SRKVVEHPQR…IGRKDTQVKM (406 aa). The 75-residue stretch at 2379-2453 folds into the Carrier 2 domain; it reads ETTDTVEDRL…DMAKLFSHGQ (75 aa). Ser-2414 carries the O-(pantetheine 4'-phosphoryl)serine modification. A condensation 2 region spans residues 2531–2929; the sequence is EDVFPCTPMQ…MEQFGHNLQT (399 aa). Residues 2979-3386 form an adenylation 3 region; that stretch reads LEETAQSQPA…GRKDGQIKLR (408 aa). A Carrier 3 domain is found at 3532–3608; that stretch reads QVLTTNESVL…DMAGQISFVQ (77 aa). Position 3569 is an O-(pantetheine 4'-phosphoryl)serine (Ser-3569). The tract at residues 3649 to 4102 is condensation 3; sequence EDVYPCTPLQ…PALSEAHLAE (454 aa). The adenylation 4 stretch occupies residues 4134–4530; it reads RRAQQSPNSQ…NLYYVRRKDS (397 aa). The Carrier 4 domain maps to 4666 to 4740; that stretch reads THTQKLLRQL…AMSSLIDEHN (75 aa). O-(pantetheine 4'-phosphoryl)serine is present on Ser-4701. The tract at residues 4785–5101 is condensation 4; sequence TLPCTEYQQM…SAIREFIPQA (317 aa).

It belongs to the NRP synthetase family. It depends on pantetheine 4'-phosphate as a cofactor.

It functions in the pathway mycotoxin biosynthesis; HC-toxin biosynthesis. In terms of biological role, non-ribosomal peptide synthetase, part of the diffuse TOX2 gene cluster that mediates the biosynthesis of the HC-toxin, cyclic tetrapeptide of structure cyclo(D-Pro-L-Ala-D-Ala-L-Aeo), where Aeo stands for 2-amino-9,10-epoxi-8-oxodecanoic acid. HC-toxin is a determinant of specificity and virulence in the interaction between the producing fungus and its host, maize. HTS1, contains four modules, one for each amino acid in HC-toxin, with the order of activation being most likely Pro, Ala, Ala, and Aeo. In addition, HTS1 has one epimerase domain between modules 1 and 2, which is responsible for epimerizing L-Pro to D-Pro. The absence of an epimerizing domain after module 3, for producing D-Ala, can be explained by the presence in the cluster of TOXG, an Ala racemase, which produces D-Ala for incorporation by HTS1 into HC-toxin. The sequence is that of HC-toxin synthetase from Cochliobolus carbonum (Maize leaf spot fungus).